A 430-amino-acid polypeptide reads, in one-letter code: Transcriptional regulatory protein RXT2 (430 aa).

The tract at residues 408-430 is disordered; sequence EIENTMEDGVVDDNEPDEEANRA.

Belongs to the RXT2 family. Component of the RPD3C(L) complex composed of at least ASH1, CTI6, DEP1, PHO23, RPD3, RXT2, RXT3, SAP30, SDS3, SIN3, UME1 and UME6.

It is found in the nucleus. Functionally, component of the RPD3C(L) histone deacetylase complex (HDAC) responsible for the deacetylation of lysine residues on the N-terminal part of the core histones (H2A, H2B, H3 and H4). Histone deacetylation gives a tag for epigenetic repression and plays an important role in transcriptional regulation, cell cycle progression and developmental events. The chain is Transcriptional regulatory protein RXT2 (RXT2) from Saccharomyces cerevisiae (strain ATCC 204508 / S288c) (Baker's yeast).